An 88-amino-acid chain; its full sequence is Protein LE25 (88 aa).

A disordered region spans residues 1-88 (MQTGKDAASA…YGATGNHTTF (88 aa)). The span at 14–65 (GMEKTKANVQEKAERMTTRDPLKKEMATEKKEDRVAAAEMGKRDAKAQHAAE) shows a compositional bias: basic and acidic residues.

Belongs to the LEA type 1 family. As to expression, accumulates in developing seeds and drought-stressed leaves.

The protein is Protein LE25 (LE25) of Solanum lycopersicum (Tomato).